We begin with the raw amino-acid sequence, 261 residues long: Receptor expression-enhancing protein 4 (261 aa).

2 helical membrane-spanning segments follow: residues 1–21 and 35–55; these read MVSW…YPAY and YVRW…ETFT. The segment at 177–261 is disordered; sequence ELHRRPIGYP…KKPAQSEPEN (85 aa). The segment covering 191-202 has biased composition (basic and acidic residues); sequence ADSDSMDERWSD.

Belongs to the DP1 family. Interacts with microtubules. In terms of tissue distribution, during gastrulation, expressed on the dorsal side of the embryo and then in the neural plate and neural tube. At tailbud stages, expressed in the somites. Expressed in the neural tube later in development.

The protein localises to the endoplasmic reticulum membrane. Microtubule-binding protein required to ensure proper cell division and nuclear envelope reassembly by sequestering the endoplasmic reticulum away from chromosomes during mitosis. Probably acts by clearing the endoplasmic reticulum membrane from metaphase chromosomes. May play a role in the maintenance of both the nervous system and the musculature. This Xenopus tropicalis (Western clawed frog) protein is Receptor expression-enhancing protein 4 (reep4).